The chain runs to 134 residues: Profilin-2 (134 aa).

Cys13 and Cys118 are disulfide-bonded. The short motif at 84-100 (AVIRGKKGSGGITIKKT) is the Involved in PIP2 interaction element. Thr114 is subject to Phosphothreonine.

This sequence belongs to the profilin family. As to quaternary structure, occurs in many kinds of cells as a complex with monomeric actin in a 1:1 ratio. Post-translationally, phosphorylated by MAP kinases.

The protein localises to the cytoplasm. It localises to the cytoskeleton. Its function is as follows. Binds to actin and affects the structure of the cytoskeleton. At high concentrations, profilin prevents the polymerization of actin, whereas it enhances it at low concentrations. The sequence is that of Profilin-2 from Olea europaea (Common olive).